Consider the following 208-residue polypeptide: Glycerol-3-phosphate acyltransferase 1 (208 aa).

A run of 5 helical transmembrane segments spans residues 52-72, 77-97, 112-132, 140-160, and 161-181; these read VVLM…YLLI, WVIL…WLDF, FLLP…LVFI, IALA…YGSH, and SEFA…KFVL.

It belongs to the PlsY family. In terms of assembly, probably interacts with PlsX.

Its subcellular location is the cell membrane. The catalysed reaction is an acyl phosphate + sn-glycerol 3-phosphate = a 1-acyl-sn-glycero-3-phosphate + phosphate. It participates in lipid metabolism; phospholipid metabolism. In terms of biological role, catalyzes the transfer of an acyl group from acyl-phosphate (acyl-PO(4)) to glycerol-3-phosphate (G3P) to form lysophosphatidic acid (LPA). This enzyme utilizes acyl-phosphate as fatty acyl donor, but not acyl-CoA or acyl-ACP. In Dehalococcoides mccartyi (strain ATCC BAA-2266 / KCTC 15142 / 195) (Dehalococcoides ethenogenes (strain 195)), this protein is Glycerol-3-phosphate acyltransferase 1.